Here is a 1327-residue protein sequence, read N- to C-terminus: P-glycoprotein 14 (1327 aa).

A compositionally biased stretch (basic and acidic residues) spans 1 to 17 (MAPKDDPDNRGFDDQRR). Positions 1 to 23 (MAPKDDPDNRGFDDQRRPSQRST) are disordered. Residues 1–104 (MAPKDDPDNR…RYGKKFDYLL (104 aa)) are Cytoplasmic-facing. The chain crosses the membrane as a helical span at residues 105-125 (LFIGTICAIISGVSQPILALV). An ABC transmembrane type-1 1 domain is found at 106 to 394 (FIGTICAIIS…ISPHMMVLLN (289 aa)). Over 126–151 (SGRVTNALLVYPPTSKQFRNKANENV) the chain is Extracellular. The helical transmembrane segment at 152–172 (YIFLGIGIFISITNFIQYMCF) threads the bilayer. The Cytoplasmic portion of the chain corresponds to 173–225 (QHCCTRVMAQMRHRFVYSVLRQNAGWFDKNHSGTITTKLNDSMERIREGIGDK). Residues 226-246 (LGVLLRGFAMLIAAIVVAYIY) form a helical membrane-spanning segment. A topological domain (extracellular) is located at residue Glu247. A helical transmembrane segment spans residues 248-268 (WRLASMMLGVAPTCCICMSLL). The Cytoplasmic segment spans residues 269–331 (ARQMTSTTIK…KFAVWKGFWS (63 aa)). The chain crosses the membrane as a helical span at residues 332-352 (GFFGGLFFFWLFSFLGCGMLY). Residues 353 to 364 (GAYLLKVGIITT) are Extracellular-facing. The chain crosses the membrane as a helical span at residues 365 to 385 (PGDVFIVVMSMLLGAYFLGLI). The Cytoplasmic portion of the chain corresponds to 386 to 766 (SPHMMVLLNA…NAKGNYLYMF (381 aa)). One can recognise an ABC transporter 1 domain in the interval 429–665 (VKFENVHFRY…GGRYFDLVKA (237 aa)). 464–471 (GHSGCGKS) is a binding site for ATP. Residues 671 to 721 (DPEATEEFEEEEIDLDDTSRSSRRSSMTSARSGSEAFRRGNSLNDSFSGSK) form a disordered region. The span at 673–686 (EATEEFEEEEIDLD) shows a compositional bias: acidic residues. The segment covering 694-704 (RSSMTSARSGS) has biased composition (low complexity). The segment covering 711–721 (NSLNDSFSGSK) has biased composition (polar residues). One can recognise an ABC transmembrane type-1 2 domain in the interval 766–1053 (FLGTVFALIR…SAQYFPEFVK (288 aa)). Residues 767–789 (LGTVFALIRGLELPALALIFGWV) traverse the membrane as a helical segment. Over 790–805 (FEGFTFVPYGGRMMHR) the chain is Extracellular. The chain crosses the membrane as a helical span at residues 806–826 (MAMAVIAFASVGVGVWFSQLA). Topologically, residues 827-886 (SSVLFAVVSENLSMRFRVQSFRNLLYQDASYFDNPAHAPGKLITRLASDAPNIKAVVDAR) are cytoplasmic. Residues 887 to 907 (MLQVIYALAAIIANIAIAFIY) traverse the membrane as a helical segment. The Extracellular portion of the chain corresponds to 908 to 910 (CWQ). The chain crosses the membrane as a helical span at residues 911 to 931 (IGILGTSLILLLAFVMIGLAY). The Cytoplasmic segment spans residues 932-996 (KISLMNVEQI…KGMIEAINYS (65 aa)). The chain crosses the membrane as a helical span at residues 997–1017 (LTQSFMYFMMCFTYAVGIRII). The Extracellular portion of the chain corresponds to 1018 to 1030 (YQGDKSSDDTFKG). A helical transmembrane segment spans residues 1031-1051 (IIAMMLGAVAVMNSAQYFPEF). Residues 1052 to 1327 (VKAKTAAGML…KLIKKQDLAV (276 aa)) are Cytoplasmic-facing. One can recognise an ABC transporter 2 domain in the interval 1086–1322 (ILFENVKFSY…KGRYYKLIKK (237 aa)). 1121–1128 (GPSGSGKS) serves as a coordination point for ATP.

Belongs to the ABC transporter superfamily. ABCB family. Multidrug resistance exporter (TC 3.A.1.201) subfamily. As to expression, expressed in pharyngeal epithelial cells that surround the anterior pharyngeal cuticle. Shares same expression pattern as sms-5.

It localises to the apical cell membrane. In terms of biological role, contributes to the establishment of a polar lipid barrier to block small molecule passage into the pharyngeal cuticle. Probably exports polar lipids into the developing pharyngeal cuticle to protect against xenobiotic insult. Likely functions in the same pathway as sphingomyelin synthase sms-5. This is P-glycoprotein 14 from Caenorhabditis elegans.